We begin with the raw amino-acid sequence, 718 residues long: DNA topoisomerase 1 (718 aa).

In terms of domain architecture, Toprim spans 9–151 (HEVIICEKPK…KFSTLTREEI (143 aa)). 2 residues coordinate Mg(2+): glutamate 15 and aspartate 113. The Topo IA-type catalytic domain occupies 162-571 (DYGQVDSGAA…EAITEVRSIL (410 aa)). Positions 202-207 (SAGRVQ) are interaction with DNA. The O-(5'-phospho-DNA)-tyrosine intermediate role is filled by tyrosine 320. A compositionally biased stretch (basic and acidic residues) spans 361-371 (HEGKKEDDAHP). The segment at 361–380 (HEGKKEDDAHPAIHPTGLLP) is disordered. 2 consecutive C4-type zinc fingers follow at residues 598 to 626 (CPAC…YPDC) and 680 to 706 (CPEC…FPKC).

The protein belongs to the type IA topoisomerase family. Monomer. The cofactor is Mg(2+).

The catalysed reaction is ATP-independent breakage of single-stranded DNA, followed by passage and rejoining.. Functionally, releases the supercoiling and torsional tension of DNA, which is introduced during the DNA replication and transcription, by transiently cleaving and rejoining one strand of the DNA duplex. Introduces a single-strand break via transesterification at a target site in duplex DNA. The scissile phosphodiester is attacked by the catalytic tyrosine of the enzyme, resulting in the formation of a DNA-(5'-phosphotyrosyl)-enzyme intermediate and the expulsion of a 3'-OH DNA strand. The free DNA strand then undergoes passage around the unbroken strand, thus removing DNA supercoils. Finally, in the religation step, the DNA 3'-OH attacks the covalent intermediate to expel the active-site tyrosine and restore the DNA phosphodiester backbone. The chain is DNA topoisomerase 1 from Methanothermobacter thermautotrophicus (strain ATCC 29096 / DSM 1053 / JCM 10044 / NBRC 100330 / Delta H) (Methanobacterium thermoautotrophicum).